Consider the following 268-residue polypeptide: MLQYPHINPVALQLGPIKIHWYGLMYLLGIFAGWYLTRYRAKVKPWAPIKPEQVGDLTFYVALGVILGGRIGYIIFYNLPYYFHNPSQMFFLWDGGMSFHGGFIGVLIAFALFARKIGANFFDLGEFIAPVIPIGLGAGRIGNFINGELWGKVTDSPLGMVFPTGGPLPRYPSQLFEFFFEGVVLFSVLWLVTIKKRPRYLVLGLFMFLYGCARFICEFFRQPDPQYGYIFFNWMTMGQILSIPMILLGAVILIAVFIKTRKNKCENI.

4 helical membrane passes run 14 to 34 (LGPI…FAGW), 57 to 77 (LTFY…IIFY), 90 to 110 (FFLW…LIAF), and 117 to 137 (IGAN…IGLG). Residue Arg140 coordinates a 1,2-diacyl-sn-glycero-3-phospho-(1'-sn-glycerol). The next 3 membrane-spanning stretches (helical) occupy residues 174–194 (QLFE…LVTI), 200–220 (YLVL…CEFF), and 238–258 (GQIL…AVFI).

The protein belongs to the Lgt family.

The protein localises to the cell inner membrane. It catalyses the reaction L-cysteinyl-[prolipoprotein] + a 1,2-diacyl-sn-glycero-3-phospho-(1'-sn-glycerol) = an S-1,2-diacyl-sn-glyceryl-L-cysteinyl-[prolipoprotein] + sn-glycerol 1-phosphate + H(+). It participates in protein modification; lipoprotein biosynthesis (diacylglyceryl transfer). Its function is as follows. Catalyzes the transfer of the diacylglyceryl group from phosphatidylglycerol to the sulfhydryl group of the N-terminal cysteine of a prolipoprotein, the first step in the formation of mature lipoproteins. The polypeptide is Phosphatidylglycerol--prolipoprotein diacylglyceryl transferase (Francisella tularensis subsp. mediasiatica (strain FSC147)).